A 542-amino-acid chain; its full sequence is uncharacterized protein (542 aa).

The next 5 helical transmembrane spans lie at 4 to 23 (ILRD…GYPL), 28 to 47 (IGGI…AFGA), 57 to 79 (IVYQ…HGFL), 86 to 108 (GVIY…LIPH), and 151 to 173 (PVVG…IYLA). 2 consecutive RCK C-terminal domains span residues 186–270 (RTLK…VIGC) and 273–356 (EVQA…LGDS). Transmembrane regions (helical) follow at residues 365–384 (IAVL…VPIP), 389–408 (ITVR…FLGA), 415–437 (LVWV…IFLA), 457–479 (WAIL…YVGY), 484–506 (IPMG…LGFA), and 519–541 (YAMV…IAVL).

Belongs to the AAE transporter (TC 2.A.81) family.

Its subcellular location is the cell membrane. This is an uncharacterized protein from Symbiobacterium thermophilum (strain DSM 24528 / JCM 14929 / IAM 14863 / T).